Consider the following 176-residue polypeptide: Large ribosomal subunit protein uL6 (176 aa).

Belongs to the universal ribosomal protein uL6 family. In terms of assembly, part of the 50S ribosomal subunit.

This protein binds to the 23S rRNA, and is important in its secondary structure. It is located near the subunit interface in the base of the L7/L12 stalk, and near the tRNA binding site of the peptidyltransferase center. The chain is Large ribosomal subunit protein uL6 from Burkholderia thailandensis (strain ATCC 700388 / DSM 13276 / CCUG 48851 / CIP 106301 / E264).